The chain runs to 477 residues: Proline--tRNA ligase (477 aa).

L-proline is bound by residues Thr111, Glu113, and Arg142. Arg142, Thr153, Gln225, and Thr228 together coordinate ATP. His230 contacts L-proline. Ser262 and Arg264 together coordinate ATP. Positions 340–369 are interaction with tRNA; it reads ELKGVPFRVELGPKDLEGGQAVLASRLGGK. Zn(2+)-binding residues include Cys427, Cys432, Cys458, and Cys461.

The protein belongs to the class-II aminoacyl-tRNA synthetase family. ProS type 3 subfamily. In terms of assembly, homodimer. Only one tRNA molecule binds per dimer.

It is found in the cytoplasm. It carries out the reaction tRNA(Pro) + L-proline + ATP = L-prolyl-tRNA(Pro) + AMP + diphosphate. Functionally, catalyzes the attachment of proline to tRNA(Pro) in a two-step reaction: proline is first activated by ATP to form Pro-AMP and then transferred to the acceptor end of tRNA(Pro). Can inadvertently accommodate and process cysteine. The chain is Proline--tRNA ligase (proS) from Thermus thermophilus (strain ATCC 27634 / DSM 579 / HB8).